Reading from the N-terminus, the 957-residue chain is SH3 domain-binding protein 4-B (957 aa).

The SH3 1 domain occupies 54–113; the sequence is ENVKEVVAIKDYCPNNFTTLKFSKGEHLYVLDASGGDWWYAHNTTEMGYIPSSYVQPLNY. Positions 312–449 constitute a ZU5 domain; it reads TSIVCRLDSS…LEPVMYVVMV (138 aa). One can recognise an SH3 2 domain in the interval 649-719; the sequence is TSLKYGKLIK…HAKNVLVVGK (71 aa).

As to quaternary structure, homodimer or homooligomer.

It localises to the membrane. Its subcellular location is the clathrin-coated pit. The protein resides in the cytoplasmic vesicle. The protein localises to the clathrin-coated vesicle. It is found in the nucleus. Its function is as follows. Possible role in regulating endocytosis of the transferrin receptor at the plasma membrane. Alternatively, may function as a negative regulator of the amino acid-induced TOR signaling by inhibiting the formation of active Rag GTPase complexes. Preferentially binds inactive Rag GTPase complexes and prevents their interaction with the mTORC1 complex inhibiting its relocalization to lysosomes and its activation. Thereby, may indirectly regulate cell growth, proliferation and autophagy. This Xenopus laevis (African clawed frog) protein is SH3 domain-binding protein 4-B (sh3bp4-b).